Here is a 633-residue protein sequence, read N- to C-terminus: Probable potassium transport system protein Kup 2 (633 aa).

A run of 12 helical transmembrane segments spans residues 18–38 (FLAL…TSPL), 61–81 (LVSL…VLFL), 107–127 (PVLM…DAMI), 143–163 (VAPA…LLLF), 173–193 (VSVF…AAGV), 211–231 (AIGF…AIFL), 255–275 (WFAV…ALVL), 287–307 (LMFP…ATII), 345–365 (IYLP…MLMF), 371–391 (LAPA…ILAF), 402–422 (ALTA…FLGA), and 427–447 (VHHG…MMWT).

The protein belongs to the HAK/KUP transporter (TC 2.A.72) family.

It localises to the cell inner membrane. The catalysed reaction is K(+)(in) + H(+)(in) = K(+)(out) + H(+)(out). Transport of potassium into the cell. Likely operates as a K(+):H(+) symporter. In Rhizobium meliloti (strain 1021) (Ensifer meliloti), this protein is Probable potassium transport system protein Kup 2.